We begin with the raw amino-acid sequence, 391 residues long: 3-ketoacyl-CoA thiolase (391 aa).

Cysteine 95 acts as the Acyl-thioester intermediate in catalysis. Residues histidine 347 and cysteine 377 each act as proton acceptor in the active site.

It belongs to the thiolase-like superfamily. Thiolase family. Heterotetramer of two alpha chains (FadB) and two beta chains (FadA).

It is found in the cytoplasm. It catalyses the reaction an acyl-CoA + acetyl-CoA = a 3-oxoacyl-CoA + CoA. It participates in lipid metabolism; fatty acid beta-oxidation. In terms of biological role, catalyzes the final step of fatty acid oxidation in which acetyl-CoA is released and the CoA ester of a fatty acid two carbons shorter is formed. This Alcanivorax borkumensis (strain ATCC 700651 / DSM 11573 / NCIMB 13689 / SK2) protein is 3-ketoacyl-CoA thiolase.